The sequence spans 128 residues: Arginine decarboxylase proenzyme (128 aa).

The Schiff-base intermediate with substrate; via pyruvic acid role is filled by Ser-76. Residue Ser-76 is modified to Pyruvic acid (Ser); by autocatalysis. The Proton acceptor; for processing activity role is filled by His-81. Cys-96 (proton donor; for catalytic activity) is an active-site residue.

Belongs to the prokaryotic AdoMetDC family. Type 1 subfamily. As to quaternary structure, heterooctamer of four alpha and four beta chains arranged as a tetramer of alpha/beta heterodimers. The cofactor is pyruvate. Post-translationally, is synthesized initially as an inactive proenzyme. Formation of the active enzyme involves a self-maturation process in which the active site pyruvoyl group is generated from an internal serine residue via an autocatalytic post-translational modification. Two non-identical subunits are generated from the proenzyme in this reaction, and the pyruvate is formed at the N-terminus of the alpha chain, which is derived from the carboxyl end of the proenzyme. The post-translation cleavage follows an unusual pathway, termed non-hydrolytic serinolysis, in which the side chain hydroxyl group of the serine supplies its oxygen atom to form the C-terminus of the beta chain, while the remainder of the serine residue undergoes an oxidative deamination to produce ammonia and the pyruvoyl group blocking the N-terminus of the alpha chain.

It carries out the reaction L-arginine + H(+) = agmatine + CO2. It participates in amine and polyamine biosynthesis; agmatine biosynthesis; agmatine from L-arginine: step 1/1. In terms of biological role, specifically catalyzes the decarboxylation of L-arginine to agmatine. Has no S-adenosylmethionine decarboxylase (AdoMetDC) activity. This chain is Arginine decarboxylase proenzyme, found in Sulfurisphaera tokodaii (strain DSM 16993 / JCM 10545 / NBRC 100140 / 7) (Sulfolobus tokodaii).